A 270-amino-acid chain; its full sequence is Regulatory protein RecX (270 aa).

The protein belongs to the RecX family.

It localises to the cytoplasm. Its function is as follows. Modulates RecA activity. In Bacillus cereus (strain G9842), this protein is Regulatory protein RecX.